Here is a 127-residue protein sequence, read N- to C-terminus: Protein P6 (127 aa).

The protein localises to the virion membrane. The chain is Protein P6 (VI) from Pseudoalteromonas espejiana (Bacteriophage PM2).